A 375-amino-acid polypeptide reads, in one-letter code: Palmitoyltransferase PFA4 (375 aa).

Over 1-9 (MAVLVKWPW) the chain is Cytoplasmic. A helical membrane pass occupies residues 10–30 (LGVAIPCFLISFTGYFAHFFV). Topologically, residues 31–33 (LTN) are lumenal. Residues 34–54 (FLSFKELLWFQVSLSMIWISY) traverse the membrane as a helical segment. Residues 55-121 (WKAIYKNPGR…MNCVGYKNFP (67 aa)) lie on the Cytoplasmic side of the membrane. In terms of domain architecture, DHHC spans 78-128 (NYCTKCETYKPERTHHCKRCNQCVLVMDHHCPWTMNCVGYKNFPHFIRFLF). Catalysis depends on C108, which acts as the S-palmitoyl cysteine intermediate. A helical transmembrane segment spans residues 122–142 (HFIRFLFWIIATTGILLHYFV). The Lumenal segment spans residues 143 to 164 (KRIKFTWVNRYATANLVSKQEL). Residues 165–185 (IFLTILTPLDAFILLTISLLF) traverse the membrane as a helical segment. The Cytoplasmic portion of the chain corresponds to 186–375 (VRCVKNQIVN…EHFGVDVEVE (190 aa)).

The protein belongs to the DHHC palmitoyltransferase family. PFA4 subfamily.

The protein localises to the endoplasmic reticulum membrane. The catalysed reaction is L-cysteinyl-[protein] + hexadecanoyl-CoA = S-hexadecanoyl-L-cysteinyl-[protein] + CoA. Its function is as follows. Mediates the reversible addition of palmitate to target proteins, thereby regulating their membrane association and biological function. This Eremothecium gossypii (strain ATCC 10895 / CBS 109.51 / FGSC 9923 / NRRL Y-1056) (Yeast) protein is Palmitoyltransferase PFA4.